The primary structure comprises 582 residues: Formate--tetrahydrofolate ligase (582 aa).

An ATP-binding site is contributed by 65–72; sequence TPLGEGKT.

This sequence belongs to the formate--tetrahydrofolate ligase family.

The enzyme catalyses (6S)-5,6,7,8-tetrahydrofolate + formate + ATP = (6R)-10-formyltetrahydrofolate + ADP + phosphate. Its pathway is one-carbon metabolism; tetrahydrofolate interconversion. The polypeptide is Formate--tetrahydrofolate ligase (Vibrio atlanticus (strain LGP32) (Vibrio splendidus (strain Mel32))).